Here is a 280-residue protein sequence, read N- to C-terminus: UPF0276 protein NMB2142 (280 aa).

The protein belongs to the UPF0276 family.

The chain is UPF0276 protein NMB2142 from Neisseria meningitidis serogroup B (strain ATCC BAA-335 / MC58).